A 359-amino-acid polypeptide reads, in one-letter code: Methyltransferase fsa4 (359 aa).

S-adenosyl-L-methionine contacts are provided by residues 198-199, aspartate 224, 248-249, arginine 264, and arginine 265; these read GG and SF.

Belongs to the class I-like SAM-binding methyltransferase superfamily. Cation-independent O-methyltransferase family.

It participates in mycotoxin biosynthesis. Its function is as follows. Methyltransferase; part of the gene cluster that mediates the biosynthesis of HIV-1 integrase inhibitor equisetin and of fusarisetin A, both trans-fused decalin-containing tetramic acids showing also antimicrobial activity. The PKS module of fsa1 together with the enoylreductase fsa3 catalyze the formation of the polyketide unit which is then conjugated to L-serine by the condensation domain of the fsa1 NRPS module. Activity of the Dieckmann cyclase domain (RED) results in release of the Dieckmann product intermediate. Diels-Alderase fsa2 is involved in endo-selective Diels-Alder cycloaddition to form the decalin ring, leading to the production of N-desmethylequisetin also called trichosetin. Subsequent N-methylation is carried out by fsa4 to give equisetin. The enzymatic gene responsible for the conversion of equisetin to fusarisetin A has not been identified yet and is probably located outside of the fsa cluster. The chain is Methyltransferase fsa4 from Fusarium sp. (strain FN080326).